Consider the following 364-residue polypeptide: F-box/kelch-repeat protein At3g23880 (364 aa).

Residues 8-54 (MFSPHNLPLEMMEEILLRLPVKSLTRFKCVCSSWRSLISETLFALKH) form the F-box domain. Kelch repeat units follow at residues 169 to 215 (DYKV…SRSG) and 216 to 265 (IYIN…TLGD).

The sequence is that of F-box/kelch-repeat protein At3g23880 from Arabidopsis thaliana (Mouse-ear cress).